The primary structure comprises 178 residues: ADP-ribosylation factor-like protein 5 (178 aa).

Gly-2 is lipidated: N-myristoyl glycine. GTP contacts are provided by residues 24–31 (GLDNAGKT), 67–71 (DIGGQ), and 126–129 (NKQD).

The protein belongs to the small GTPase superfamily. Arf family.

The protein resides in the golgi apparatus. Functionally, GTP-binding protein that may be involved in protein trafficking; may modulate vesicle budding and uncoating within the Golgi apparatus. Plays a role in the shedding of pathogen spores from intestinal cells. The protein is ADP-ribosylation factor-like protein 5 (arl-5) of Caenorhabditis elegans.